A 613-amino-acid chain; its full sequence is Spastin (613 aa).

Residues 1–42 (MNSPGGRGKKKGSAGSSSAPPAAGASPSAPSGPAPPAPPAGA) are disordered. Over 1–61 (MNSPGGRGKK…KRNLYYFSYP (61 aa)) the chain is Cytoplasmic. Residues 13–29 (SAGSSSAPPAAGASPSA) show a composition bias toward low complexity. Residues 30-39 (PSGPAPPAPP) are compositionally biased toward pro residues. The helical intramembrane region spans 62–82 (LFAAFALLRFVAFQLGLLVAW). Topologically, residues 83-613 (LCERLSRGAL…WNKDFGDTTV (531 aa)) are cytoplasmic. Positions 117–192 (HKRAFECISM…AMAKDRLQLL (76 aa)) constitute an MIT domain. Residues 224–312 (SESGAVPKKK…PAARKKKDTK (89 aa)) form a disordered region. Composition is skewed to polar residues over residues 237-257 (THTSNSLPRSKTVAKTGSTGL), 264-274 (PSYSGISTASV), and 281-299 (PATSTHKAAPKNSRTNKPS). Residue 379–386 (GPPGNGKT) participates in ATP binding.

It belongs to the AAA ATPase family. Spastin subfamily. As to quaternary structure, homohexamer. The homohexamer is stabilized by ATP-binding. The homohexamer may adopt a ring conformation through which microtubules pass prior to being severed. Interacts with microtubules.

The protein localises to the membrane. Its subcellular location is the cytoplasm. It is found in the cytoskeleton. The protein resides in the microtubule organizing center. It localises to the centrosome. The protein localises to the perinuclear region. Its subcellular location is the nucleus. It catalyses the reaction n ATP + n H2O + a microtubule = n ADP + n phosphate + (n+1) alpha/beta tubulin heterodimers.. In terms of biological role, ATP-dependent microtubule severing protein that specifically recognizes and cuts microtubules that are polyglutamylated. Preferentially recognizes and acts on microtubules decorated with short polyglutamate tails: severing activity increases as the number of glutamates per tubulin rises from one to eight, but decreases beyond this glutamylation threshold. Microtubule severing promotes reorganization of cellular microtubule arrays and the release of microtubules from the centrosome following nucleation. Required for membrane traffic from the endoplasmic reticulum (ER) to the Golgi and for completion of the abscission stage of cytokinesis. Also plays a role in axon growth and the formation of axonal branches. This Gallus gallus (Chicken) protein is Spastin.